The primary structure comprises 146 residues: Phospholipase A2 PS22 (146 aa).

The N-terminal stretch at 1–19 (MYPAHLLVLLAVCVSLLGA) is a signal peptide. Residues 20 to 27 (ASVPPQPL) constitute a propeptide that is removed on maturation. Cystine bridges form between Cys38/Cys98, Cys54/Cys145, Cys56/Cys72, Cys71/Cys126, Cys78/Cys119, Cys87/Cys112, and Cys105/Cys117. Positions 55, 57, and 59 each coordinate Ca(2+). Residue His75 is part of the active site. Asp76 lines the Ca(2+) pocket. Asp120 is an active-site residue.

Belongs to the phospholipase A2 family. Group I subfamily. D49 sub-subfamily. Requires Ca(2+) as cofactor. In terms of tissue distribution, expressed by the venom gland.

Its subcellular location is the secreted. It catalyses the reaction a 1,2-diacyl-sn-glycero-3-phosphocholine + H2O = a 1-acyl-sn-glycero-3-phosphocholine + a fatty acid + H(+). Snake venom phospholipase A2 (PLA2) that inhibits collagen-induced platelet aggregation. PLA2 catalyzes the calcium-dependent hydrolysis of the 2-acyl groups in 3-sn-phosphoglycerides. The protein is Phospholipase A2 PS22 of Drysdalia coronoides (White-lipped snake).